The sequence spans 265 residues: Hydroxyethylthiazole kinase (265 aa).

Position 44 (Met44) interacts with substrate. Lys120 and Thr166 together coordinate ATP. Position 193 (Gly193) interacts with substrate.

The protein belongs to the Thz kinase family. Mg(2+) serves as cofactor.

The catalysed reaction is 5-(2-hydroxyethyl)-4-methylthiazole + ATP = 4-methyl-5-(2-phosphooxyethyl)-thiazole + ADP + H(+). It participates in cofactor biosynthesis; thiamine diphosphate biosynthesis; 4-methyl-5-(2-phosphoethyl)-thiazole from 5-(2-hydroxyethyl)-4-methylthiazole: step 1/1. Its function is as follows. Catalyzes the phosphorylation of the hydroxyl group of 4-methyl-5-beta-hydroxyethylthiazole (THZ). The sequence is that of Hydroxyethylthiazole kinase from Clostridium novyi (strain NT).